The chain runs to 133 residues: Pheromone-regulated membrane protein 3 (133 aa).

Topologically, residues 1–104 are nuclear; the sequence is MTAMKEDNAA…SKVQRENKGS (104 aa). The interval 36–100 is disordered; that stretch reads ADGFVINKAK…DASESKVQRE (65 aa). The Bipartite nuclear localization signal signature appears at 69–75; sequence GRVRKHK. Residues 90 to 100 are compositionally biased toward basic and acidic residues; the sequence is KDASESKVQRE. The helical transmembrane segment at 105-127 threads the bilayer; sequence FYQGAIFGSFLGAAVTTVLSNLA. Over 128–133 the chain is Perinuclear space; it reads VKALQN.

As to quaternary structure, interacts with KAR5.

The protein localises to the nucleus outer membrane. It is found in the cytoplasm. It localises to the cytoskeleton. Its subcellular location is the microtubule organizing center. The protein resides in the spindle pole body. Its function is as follows. Required for the fusion of nuclear envelopes during mating, ensuring proper karyogamy. Plays a role in the initiation of outer nuclear envelope fusion. In Saccharomyces cerevisiae (strain ATCC 204508 / S288c) (Baker's yeast), this protein is Pheromone-regulated membrane protein 3 (PRM3).